The primary structure comprises 430 residues: Formate-dependent phosphoribosylglycinamide formyltransferase (430 aa).

N(1)-(5-phospho-beta-D-ribosyl)glycinamide-binding positions include glutamate 26–leucine 27 and glutamate 86. ATP-binding positions include arginine 118, lysine 159, glutamate 199 to isoleucine 202, and glutamate 207. Positions glutamate 123 to leucine 319 constitute an ATP-grasp domain. Residues glutamate 276 and glutamate 288 each coordinate Mg(2+). N(1)-(5-phospho-beta-D-ribosyl)glycinamide-binding positions include aspartate 295, lysine 375, and arginine 382 to arginine 383.

The protein belongs to the PurK/PurT family. As to quaternary structure, homodimer.

The enzyme catalyses N(1)-(5-phospho-beta-D-ribosyl)glycinamide + formate + ATP = N(2)-formyl-N(1)-(5-phospho-beta-D-ribosyl)glycinamide + ADP + phosphate + H(+). Its pathway is purine metabolism; IMP biosynthesis via de novo pathway; N(2)-formyl-N(1)-(5-phospho-D-ribosyl)glycinamide from N(1)-(5-phospho-D-ribosyl)glycinamide (formate route): step 1/1. In terms of biological role, involved in the de novo purine biosynthesis. Catalyzes the transfer of formate to 5-phospho-ribosyl-glycinamide (GAR), producing 5-phospho-ribosyl-N-formylglycinamide (FGAR). Formate is provided by PurU via hydrolysis of 10-formyl-tetrahydrofolate. The chain is Formate-dependent phosphoribosylglycinamide formyltransferase from Pyrococcus horikoshii (strain ATCC 700860 / DSM 12428 / JCM 9974 / NBRC 100139 / OT-3).